Reading from the N-terminus, the 125-residue chain is MSNPQQLRYSKEHEWLSGAEDGVSTVGITEHAANALGDVVYVQLPEVGDTVTAGETCGELESTKSVSDLYSPVTGEVVEANQDVVDDPSLVNSAPFEGGWLFKVRVAEEPKDLLSADEYTEFSGS.

Positions 23–105 (VSTVGITEHA…FEGGWLFKVR (83 aa)) constitute a Lipoyl-binding domain. Lysine 64 carries the N6-lipoyllysine modification.

It belongs to the GcvH family. In terms of assembly, the glycine cleavage system is composed of four proteins: P, T, L and H. Requires (R)-lipoate as cofactor.

In terms of biological role, the glycine cleavage system catalyzes the degradation of glycine. The H protein shuttles the methylamine group of glycine from the P protein to the T protein. The polypeptide is Glycine cleavage system H protein (Streptomyces avermitilis (strain ATCC 31267 / DSM 46492 / JCM 5070 / NBRC 14893 / NCIMB 12804 / NRRL 8165 / MA-4680)).